Reading from the N-terminus, the 421-residue chain is 3-phosphoshikimate 1-carboxyvinyltransferase (421 aa).

The 3-phosphoshikimate site is built by Lys19, Ser20, and Arg24. Lys19 contacts phosphoenolpyruvate. The phosphoenolpyruvate site is built by Gly88 and Arg116. 3-phosphoshikimate contacts are provided by Ser160, Gln162, Asp307, and Lys334. Gln162 serves as a coordination point for phosphoenolpyruvate. The Proton acceptor role is filled by Asp307. Phosphoenolpyruvate contacts are provided by Arg338 and Arg380.

Belongs to the EPSP synthase family. Monomer.

It localises to the cytoplasm. It carries out the reaction 3-phosphoshikimate + phosphoenolpyruvate = 5-O-(1-carboxyvinyl)-3-phosphoshikimate + phosphate. The protein operates within metabolic intermediate biosynthesis; chorismate biosynthesis; chorismate from D-erythrose 4-phosphate and phosphoenolpyruvate: step 6/7. Its function is as follows. Catalyzes the transfer of the enolpyruvyl moiety of phosphoenolpyruvate (PEP) to the 5-hydroxyl of shikimate-3-phosphate (S3P) to produce enolpyruvyl shikimate-3-phosphate and inorganic phosphate. This is 3-phosphoshikimate 1-carboxyvinyltransferase from Thermotoga sp. (strain RQ2).